The following is a 120-amino-acid chain: Large ribosomal subunit protein uL18 (120 aa).

The protein belongs to the universal ribosomal protein uL18 family. Part of the 50S ribosomal subunit; part of the 5S rRNA/L5/L18/L25 subcomplex. Contacts the 5S and 23S rRNAs.

This is one of the proteins that bind and probably mediate the attachment of the 5S RNA into the large ribosomal subunit, where it forms part of the central protuberance. In Brucella suis biovar 1 (strain 1330), this protein is Large ribosomal subunit protein uL18.